The chain runs to 641 residues: Isomalto-dextranase (641 aa).

Residues 1–39 (MMNLSRRTLLTTGSAATLAYALGMAGSAQAATAVTARPG) constitute a signal peptide (tat-type signal). D227 functions as the Nucleophile in the catalytic mechanism. D288 acts as the Proton donor in catalysis. Positions 500 to 640 (TRYPAAFAAW…AINLNWIELD (141 aa)) constitute a CBM6 domain. The segment at 556 to 588 (SGYRYANATDDNTTSKTTTKKANPEKADRSTVD) is disordered. A compositionally biased stretch (low complexity) spans 561-576 (ANATDDNTTSKTTTKK). Positions 577 to 586 (ANPEKADRST) are enriched in basic and acidic residues.

Belongs to the glycosyl hydrolase 27 family. In terms of processing, predicted to be exported by the Tat system. The position of the signal peptide cleavage has been experimentally proven.

Its subcellular location is the secreted. The enzyme catalyses Hydrolysis of (1-&gt;6)-alpha-D-glucosidic linkages in polysaccharides, to remove successive isomaltose units from the non-reducing ends of the chains.. This Arthrobacter globiformis protein is Isomalto-dextranase (imd).